The sequence spans 452 residues: MQVTETLSEGLKHEFQVSVPAADLDAKADAKLVDLKDKVRINGFRPGKVPVAHLKKIYGKSVMAETIDQTIRDTNTQIFTERGFRLATEPKVTMPTEEAEVEKILSGQSDLTYTVAVEVVPAITLADFKTFSVEKPVADITDADVDEAIKRLADANRSYAAKAEGAKAESGDRVKVNFKGTIDGVAFDGGTGEGIDVVIGSNTFIPGFEDQLIGIGVGETRTLKVAFPKNYLNNDLAGKDAEFETTATAIETPEEKVVDDEFAKTLGLESLDKLKQLMRDRLAGEFNQATRQRVKRALLDRLDETHKFDAPPSLIDEEFNLMWNSVKAEMDSSGKTFADENTTEEKAKEEYRTIADRRVRLGLVLSEIGEKNKITVTDDEVSRAVIERARSMPGREKEVWDFYRSNPQALAQLRAPIYEDKVVDFILELANVTEKKVSKDELFKDDENDKAA.

The 86-residue stretch at 171–256 (GDRVKVNFKG…ATAIETPEEK (86 aa)) folds into the PPIase FKBP-type domain.

Belongs to the FKBP-type PPIase family. Tig subfamily.

The protein localises to the cytoplasm. It carries out the reaction [protein]-peptidylproline (omega=180) = [protein]-peptidylproline (omega=0). In terms of biological role, involved in protein export. Acts as a chaperone by maintaining the newly synthesized protein in an open conformation. Functions as a peptidyl-prolyl cis-trans isomerase. In Bradyrhizobium sp. (strain BTAi1 / ATCC BAA-1182), this protein is Trigger factor.